The primary structure comprises 125 residues: MINSPRVCIQVQSVYIEAQSSPDNERYVFAYTVTIRNLGRAPVQLLGRYWLITNGNGRETEVQGEGVVGVQPLIAPGEEYQYTSGAIIETPLGTMQGHYEMIDENGVPFSIDIPVFRLAVPTLIH.

Residues 1 to 125 enclose the ApaG domain; the sequence is MINSPRVCIQ…FRLAVPTLIH (125 aa).

This Escherichia coli (strain SE11) protein is Protein ApaG.